The chain runs to 148 residues: Large ribosomal subunit protein bL9 (148 aa).

The protein belongs to the bacterial ribosomal protein bL9 family.

Its function is as follows. Binds to the 23S rRNA. In Macrococcus caseolyticus (strain JCSC5402) (Macrococcoides caseolyticum), this protein is Large ribosomal subunit protein bL9.